Here is a 414-residue protein sequence, read N- to C-terminus: MKIYLVGGAIRDRLLNIPVRDRDWVVVGIRDPKEMLKKNYQQVGKGFPVFIHPKTHEEYSLARTEKKNGVGHTGFLFDFSSRITLKEDLKRRDLTINAIAQDSSGKIIDFFNGKKDIQKKILRHVSYSFQEDPLRVLRIARFAALLSHLGFYIAKKTLSLMKLICSRKELLYLTPERIWKETQKGLSTQNPHVYFQVLYSCNALFFLFPEINYFYKKTYFLNSFIKHINLVQYSLIELSKISKVTKDINIRFSYFLQFFYYVYPIPNIGTKDYFFYKKPAFLLKKMLIRLKIPKETSEIIFFLCGFHNFLQNINIQSSKLIIKFFNIIDVWRKPNRLNQLIYLDFYNFNSLKNKKNDFFLGKLLKYMFSLIKDISVCSFIKEKKFKGIEIKNDLNRLRIQSFKEMKEKIILNIF.

G8 and R11 together coordinate ATP. G8 and R11 together coordinate CTP. 2 residues coordinate Mg(2+): D21 and D23. Positions 92, 138, and 141 each coordinate ATP. The CTP site is built by R92, R138, and R141.

The protein belongs to the tRNA nucleotidyltransferase/poly(A) polymerase family. Bacterial CCA-adding enzyme type 2 subfamily. The cofactor is Mg(2+).

The enzyme catalyses a tRNA precursor + 2 CTP + ATP = a tRNA with a 3' CCA end + 3 diphosphate. It catalyses the reaction a tRNA with a 3' CCA end + 2 CTP + ATP = a tRNA with a 3' CCACCA end + 3 diphosphate. Catalyzes the addition and repair of the essential 3'-terminal CCA sequence in tRNAs without using a nucleic acid template. Adds these three nucleotides in the order of C, C, and A to the tRNA nucleotide-73, using CTP and ATP as substrates and producing inorganic pyrophosphate. tRNA 3'-terminal CCA addition is required both for tRNA processing and repair. Also involved in tRNA surveillance by mediating tandem CCA addition to generate a CCACCA at the 3' terminus of unstable tRNAs. While stable tRNAs receive only 3'-terminal CCA, unstable tRNAs are marked with CCACCA and rapidly degraded. This Buchnera aphidicola subsp. Cinara cedri (strain Cc) protein is CCA-adding enzyme.